An 879-amino-acid chain; its full sequence is DNA methyltransferase A (879 aa).

It belongs to the methyltransferase superfamily.

The enzyme catalyses a 2'-deoxyadenosine in DNA + S-adenosyl-L-methionine = an N(6)-methyl-2'-deoxyadenosine in DNA + S-adenosyl-L-homocysteine + H(+). In terms of biological role, recognizes the double-stranded sequence 5'-GACGAG-3' and methylates A-5, yielding m6A. m6A methylation functions as a transcriptional modifier, promoting transcription of a number of genes (at least scpA, hbs, rnhC, yumC and zapA). One studied mechanism is via transcriptional repressor ScoC (also called hpr) which binds to non-methylated scpA promoter; when the m6A target is methylated ScoC no longer binds and scpA transcription is up-regulated. Other mechanisms for gene expression regulation probably exist. Binds DNA with and without the target sequence. Although it resembles a restriction-modification system, it does not have detectable endonuclease activity under tested conditions. A gamma subtype methylase. The chain is DNA methyltransferase A from Bacillus subtilis (strain 168).